A 384-amino-acid polypeptide reads, in one-letter code: Outer membrane protein assembly factor BamC (384 aa).

Residues 1–23 form the signal peptide; the sequence is MNKLNSVVVARGAVAVLLIGLAG. Cys24 is lipidated: N-palmitoyl cysteine. A lipid anchor (S-diacylglycerol cysteine) is attached at Cys24. 2 disordered regions span residues 47–70 and 251–273; these read LEVP…TSGK and QAAQ…SGTL.

This sequence belongs to the BamC family. In terms of assembly, part of the Bam complex.

The protein localises to the cell outer membrane. Functionally, part of the outer membrane protein assembly complex, which is involved in assembly and insertion of beta-barrel proteins into the outer membrane. This chain is Outer membrane protein assembly factor BamC, found in Accumulibacter regalis.